A 586-amino-acid polypeptide reads, in one-letter code: Pectinesterase 1 (586 aa).

An N-terminal signal peptide occupies residues 1–49 (MDSVNSFKGYGKVDEAQDLALKKKTRKRLLLLSISVVVLIAVIIAAVVA). N-linked (GlcNAc...) asparagine glycans are attached at residues Asn57, Asn97, Asn154, Asn201, and Asn207. The RRLM cleavage motif motif lies at 250–253 (RRLM). An RRLL cleavage motif motif is present at residues 269–272 (RRLL). Substrate contacts are provided by Thr355 and Gln385. The active-site Proton donor is Asp408. A disulfide bridge connects residues Cys422 and Cys442. Asp429 functions as the Nucleophile in the catalytic mechanism. N-linked (GlcNAc...) asparagine glycosylation is present at Asn466. Residues Arg492 and Trp494 each coordinate substrate.

The protein in the N-terminal section; belongs to the PMEI family. This sequence in the C-terminal section; belongs to the pectinesterase family. In terms of assembly, interacts with SBT6.1. As to expression, expressed in siliques.

Its subcellular location is the secreted. It localises to the cell wall. The protein resides in the golgi apparatus membrane. The catalysed reaction is [(1-&gt;4)-alpha-D-galacturonosyl methyl ester](n) + n H2O = [(1-&gt;4)-alpha-D-galacturonosyl](n) + n methanol + n H(+). The protein operates within glycan metabolism; pectin degradation; 2-dehydro-3-deoxy-D-gluconate from pectin: step 1/5. Acts in the modification of cell walls via demethylesterification of cell wall pectin. Demethylates protein phosphatase 2A (PP2A) that have been reversibly carboxymethylated by LCMT1. Acts as a negative regulators of genes involved in salt stress response. In Arabidopsis thaliana (Mouse-ear cress), this protein is Pectinesterase 1 (PME1).